A 336-amino-acid polypeptide reads, in one-letter code: Fructose-1,6-bisphosphatase class 1 (336 aa).

Residues Glu-90, Asp-112, Leu-114, and Asp-115 each coordinate Mg(2+). Residues 115 to 118, Asn-211, and Lys-277 each bind substrate; that span reads DGSS. A Mg(2+)-binding site is contributed by Glu-283.

The protein belongs to the FBPase class 1 family. Homotetramer. The cofactor is Mg(2+).

It is found in the cytoplasm. It catalyses the reaction beta-D-fructose 1,6-bisphosphate + H2O = beta-D-fructose 6-phosphate + phosphate. Its pathway is carbohydrate biosynthesis; gluconeogenesis. The chain is Fructose-1,6-bisphosphatase class 1 from Pseudomonas fluorescens (strain ATCC BAA-477 / NRRL B-23932 / Pf-5).